Here is a 313-residue protein sequence, read N- to C-terminus: Pyrimidine-specific ribonucleoside hydrolase RihB (313 aa).

Asp11 acts as the Proton acceptor in catalysis. Residues Asp11, Asp16, and Val124 each coordinate Ca(2+). The substrate site is built by Gln227 and His239. Position 240 (Asp240) interacts with Ca(2+).

This sequence belongs to the IUNH family. RihB subfamily. Homotetramer. Requires Ca(2+) as cofactor.

The catalysed reaction is a pyrimidine ribonucleoside + H2O = a pyrimidine nucleobase + D-ribose. Hydrolyzes cytidine or uridine to ribose and cytosine or uracil, respectively. Has a clear preference for cytidine over uridine. Strictly specific for ribonucleosides. This Escherichia coli O17:K52:H18 (strain UMN026 / ExPEC) protein is Pyrimidine-specific ribonucleoside hydrolase RihB.